The sequence spans 1401 residues: DNA-directed RNA polymerase subunit beta (1401 aa).

Belongs to the RNA polymerase beta chain family. The RNAP catalytic core consists of 2 alpha, 1 beta, 1 beta' and 1 omega subunit. When a sigma factor is associated with the core the holoenzyme is formed, which can initiate transcription.

It carries out the reaction RNA(n) + a ribonucleoside 5'-triphosphate = RNA(n+1) + diphosphate. Functionally, DNA-dependent RNA polymerase catalyzes the transcription of DNA into RNA using the four ribonucleoside triphosphates as substrates. The sequence is that of DNA-directed RNA polymerase subunit beta from Zymomonas mobilis subsp. mobilis (strain ATCC 31821 / ZM4 / CP4).